The primary structure comprises 591 residues: Aspartate--tRNA(Asp/Asn) ligase (591 aa).

Glutamate 174 provides a ligand contact to L-aspartate. The segment at 198 to 201 (QLFK) is aspartate. L-aspartate is bound at residue arginine 220. Residues 220 to 222 (RDE) and glutamine 229 each bind ATP. Position 450 (histidine 450) interacts with L-aspartate. Glutamate 483 contributes to the ATP binding site. Residue arginine 490 coordinates L-aspartate. 535–538 (GLDR) provides a ligand contact to ATP.

This sequence belongs to the class-II aminoacyl-tRNA synthetase family. Type 1 subfamily. Homodimer.

The protein localises to the cytoplasm. The catalysed reaction is tRNA(Asx) + L-aspartate + ATP = L-aspartyl-tRNA(Asx) + AMP + diphosphate. Functionally, aspartyl-tRNA synthetase with relaxed tRNA specificity since it is able to aspartylate not only its cognate tRNA(Asp) but also tRNA(Asn). Reaction proceeds in two steps: L-aspartate is first activated by ATP to form Asp-AMP and then transferred to the acceptor end of tRNA(Asp/Asn). This is Aspartate--tRNA(Asp/Asn) ligase from Ectopseudomonas mendocina (strain ymp) (Pseudomonas mendocina).